The following is a 338-amino-acid chain: MNTRPFYFGLIFIAIIAVLANYLGSTDFSHHYHISALIIAILLGMAIGNTIYPQFSSQVEKGVLFAKGTLLRAGIVLYGFRLTFGDIADVGLNAVVTDAIMLISTFFLTALLGIRYLKMDKQLVYLTGAGCSICGAAAVMAAEPVTKAESHKVSVAIAVVVIFGTLSIFTYPFFYTWSQHLINAHQFGIYVGSSVHEVAQVYAIGGNIDPIVANTAVITKMLRVMMLAPFLFMLSWLLTRSDGISENTSHKITIPWFAVLFIGVAIFNSFDLLPKELVKLFVEIDSFLLISAMAALGLTTQASAIKKAGLKPLVLGVLIYLWLVIGGFLVNYGISKLI.

The next 10 helical transmembrane spans lie at 5–23 (PFYF…ANYL), 33–55 (HISA…YPQF), 62–84 (GVLF…RLTF), 94–116 (AVVT…GIRY), 123–145 (LVYL…AEPV), 155–177 (VAIA…FYTW), 222–239 (LRVM…WLLT), 254–273 (IPWF…FDLL), 280–302 (LFVE…TTQA), and 312–334 (PLVL…NYGI).

The protein belongs to the UPF0324 family.

The protein resides in the cell membrane. The sequence is that of UPF0324 membrane protein HI_1643 from Haemophilus influenzae (strain ATCC 51907 / DSM 11121 / KW20 / Rd).